An 81-amino-acid chain; its full sequence is Insulin-like growth factor 1 (81 aa).

The propeptide occupies phenylalanine 1 to alanine 4. The b stretch occupies residues glycine 5–threonine 33. Disulfide bonds link cysteine 10/cysteine 52, cysteine 22/cysteine 65, and cysteine 51/cysteine 56. The segment at glycine 34–threonine 45 is c. Residues glycine 46–alanine 66 form an a region. Residues proline 67–alanine 74 form a d region. The propeptide at arginine 75–arginine 81 is e peptide.

Belongs to the insulin family. As to quaternary structure, forms a ternary complex with IGFR1 and ITGAV:ITGB3. Forms a ternary complex with IGFR1 and ITGA6:ITGB4.

The protein resides in the secreted. Functionally, the insulin-like growth factors, isolated from plasma, are structurally and functionally related to insulin but have a much higher growth-promoting activity. May be a physiological regulator of [1-14C]-2-deoxy-D-glucose (2DG) transport and glycogen synthesis in osteoblasts. Stimulates glucose transport in bone-derived osteoblastic (PyMS) cells and is effective at much lower concentrations than insulin, not only regarding glycogen and DNA synthesis but also with regard to enhancing glucose uptake. May play a role in synapse maturation. Ca(2+)-dependent exocytosis of IGF1 is required for sensory perception of smell in the olfactory bulb. Acts as a ligand for IGF1R. Binds to the alpha subunit of IGF1R, leading to the activation of the intrinsic tyrosine kinase activity which autophosphorylates tyrosine residues in the beta subunit thus initiating a cascade of down-stream signaling events leading to activation of the PI3K-AKT/PKB and the Ras-MAPK pathways. Binds to integrins ITGAV:ITGB3 and ITGA6:ITGB4. Its binding to integrins and subsequent ternary complex formation with integrins and IGFR1 are essential for IGF1 signaling. Induces the phosphorylation and activation of IGFR1, MAPK3/ERK1, MAPK1/ERK2 and AKT1. As part of the MAPK/ERK signaling pathway, acts as a negative regulator of apoptosis in cardiomyocytes via promotion of STUB1/CHIP-mediated ubiquitination and degradation of ICER-type isoforms of CREM. This chain is Insulin-like growth factor 1, found in Suncus murinus (Asian house shrew).